A 260-amino-acid polypeptide reads, in one-letter code: Proteasome subunit alpha type-1 (260 aa).

The disordered stretch occupies residues 231–260; it reads FLEGLEERPQRKPALPADEPAEKAEEPMEH. The span at 250 to 260 shows a compositional bias: basic and acidic residues; the sequence is PAEKAEEPMEH.

Belongs to the peptidase T1A family. The 26S proteasome consists of a 20S proteasome core and two 19S regulatory subunits. The 20S proteasome core is a barrel-shaped complex made of 28 subunits that are arranged in four stacked rings. The two outer rings are each formed by seven alpha subunits, and the two inner rings are formed by seven beta subunits. The proteolytic activity is exerted by three beta-subunits PSMB5, PSMB6 and PSMB7.

The protein resides in the cytoplasm. It is found in the nucleus. Functionally, component of the 20S core proteasome complex involved in the proteolytic degradation of most intracellular proteins. This complex plays numerous essential roles within the cell by associating with different regulatory particles. Associated with two 19S regulatory particles, forms the 26S proteasome and thus participates in the ATP-dependent degradation of ubiquitinated proteins. The 26S proteasome plays a key role in the maintenance of protein homeostasis by removing misfolded or damaged proteins that could impair cellular functions, and by removing proteins whose functions are no longer required. Associated with the PA200 or PA28, the 20S proteasome mediates ubiquitin-independent protein degradation. This type of proteolysis is required in several pathways including spermatogenesis (20S-PA200 complex) or generation of a subset of MHC class I-presented antigenic peptides (20S-PA28 complex). The polypeptide is Proteasome subunit alpha type-1 (PSMA1) (Gallus gallus (Chicken)).